Consider the following 312-residue polypeptide: Non-structural protein 12A (312 aa).

Low complexity predominate over residues 1 to 23 (MFKSGSGSLKRSGSISSVKSFSG). 3 disordered regions span residues 1 to 37 (MFKSGSGSLKRSGSISSVKSFSGDSEKGLPPISRGSV), 62 to 97 (FVPEKTKSEGNLKNKSSVITGNFGSSGPTNAHYNQN), and 112 to 159 (SSKG…SHGT). The span at 63 to 73 (VPEKTKSEGNL) shows a compositional bias: basic and acidic residues. Over residues 74-97 (KNKSSVITGNFGSSGPTNAHYNQN) the composition is skewed to polar residues. Residues 122-134 (DARHTATDSRLSQ) show a composition bias toward basic and acidic residues. Over residues 135 to 154 (EVKQPFSEENASGNDLNTGR) the composition is skewed to polar residues.

It belongs to the phytoreovirus non-structural protein Pns12A family.

It is found in the host cytoplasm. Functionally, constituent of viral factories. The protein is Non-structural protein 12A of Rice dwarf virus (isolate O) (RDV).